A 282-amino-acid polypeptide reads, in one-letter code: B3 domain-containing protein At5g25475 (282 aa).

Positions 20 to 114 (WKSLSPGQTW…NLEVQIFKNN (95 aa)) form a DNA-binding region, TF-B3. The interval 127 to 178 (PETEPFHPTPKKPHKETTPASSFASGSGCSANGGTNGRGKQRSSDVKNPERY) is disordered. Residues 144–159 (TPASSFASGSGCSANG) are compositionally biased toward low complexity.

Its subcellular location is the nucleus. The polypeptide is B3 domain-containing protein At5g25475 (Arabidopsis thaliana (Mouse-ear cress)).